A 151-amino-acid polypeptide reads, in one-letter code: Austinoid biosynthesis clusters protein F (151 aa).

This sequence belongs to the trt14 isomerase family. Homodimer.

It participates in secondary metabolite biosynthesis; terpenoid biosynthesis. Part of the gene cluster B that mediates the biosynthesis of the fungal meroterpenoid acetoxydehydroaustin. The first step of the pathway is the synthesis of 3,5-dimethylorsellinic acid by the polyketide synthase ausA. 3,5-dimethylorsellinic acid is then prenylated by the polyprenyl transferase ausN. Further epoxidation by the FAD-dependent monooxygenase ausM and cyclization by the probable terpene cyclase ausL lead to the formation of protoaustinoid A. Protoaustinoid A is then oxidized to spiro-lactone preaustinoid A3 by the combined action of the FAD-binding monooxygenases ausB and ausC, and the dioxygenase ausE. Acid-catalyzed keto-rearrangement and ring contraction of the tetraketide portion of preaustinoid A3 by ausJ lead to the formation of preaustinoid A4. The aldo-keto reductase ausK, with the help of ausH, is involved in the next step by transforming preaustinoid A4 into isoaustinone which is in turn hydroxylated by the P450 monooxygenase ausI to form austinolide. The cytochrome P450 monooxygenase ausG then modifies austinolide to austinol. Austinol is further acetylated to austin by the O-acetyltransferase ausP, which spontaneously changes to dehydroaustin. The cytochrome P450 monooxygenase then converts dehydroaustin is into 7-dehydrodehydroaustin. The hydroxylation catalyzed by ausR permits the second O-acetyltransferase ausQ to add an additional acetyl group to the molecule, leading to the formation of acetoxydehydroaustin. Due to genetic rearrangements of the clusters and the subsequent loss of some enzymes, the end product of the Penicillium brasilianum austinoid biosynthesis clusters is acetoxydehydroaustin. The sequence is that of Austinoid biosynthesis clusters protein F from Penicillium brasilianum.